The chain runs to 185 residues: Elongation factor P (185 aa).

This sequence belongs to the elongation factor P family.

It is found in the cytoplasm. The protein operates within protein biosynthesis; polypeptide chain elongation. Its function is as follows. Involved in peptide bond synthesis. Stimulates efficient translation and peptide-bond synthesis on native or reconstituted 70S ribosomes in vitro. Probably functions indirectly by altering the affinity of the ribosome for aminoacyl-tRNA, thus increasing their reactivity as acceptors for peptidyl transferase. The protein is Elongation factor P of Mesomycoplasma hyopneumoniae (strain 7448) (Mycoplasma hyopneumoniae).